The primary structure comprises 508 residues: Light-independent protochlorophyllide reductase subunit B (508 aa).

Asp-36 is a [4Fe-4S] cluster binding site. The Proton donor role is filled by Asp-294. Residue 429–430 (GM) coordinates substrate.

It belongs to the ChlB/BchB/BchZ family. In terms of assembly, protochlorophyllide reductase is composed of three subunits; ChlL, ChlN and ChlB. Forms a heterotetramer of two ChlB and two ChlN subunits. [4Fe-4S] cluster serves as cofactor.

It catalyses the reaction chlorophyllide a + oxidized 2[4Fe-4S]-[ferredoxin] + 2 ADP + 2 phosphate = protochlorophyllide a + reduced 2[4Fe-4S]-[ferredoxin] + 2 ATP + 2 H2O. The protein operates within porphyrin-containing compound metabolism; chlorophyll biosynthesis (light-independent). Its function is as follows. Component of the dark-operative protochlorophyllide reductase (DPOR) that uses Mg-ATP and reduced ferredoxin to reduce ring D of protochlorophyllide (Pchlide) to form chlorophyllide a (Chlide). This reaction is light-independent. The NB-protein (ChlN-ChlB) is the catalytic component of the complex. The sequence is that of Light-independent protochlorophyllide reductase subunit B from Rippkaea orientalis (strain PCC 8801 / RF-1) (Cyanothece sp. (strain PCC 8801)).